The following is a 130-amino-acid chain: Histone H2A type 1-K (130 aa).

The segment at Met-1–Ala-22 is disordered. Ser-2 is modified (N-acetylserine). Ser-2 carries the phosphoserine; by RPS6KA5 modification. Arg-4 bears the Citrulline; alternate mark. Arg-4 bears the Symmetric dimethylarginine; by PRMT5; alternate mark. Lys-6 and Lys-10 each carry N6-(2-hydroxyisobutyryl)lysine; alternate. Lys-6 is subject to N6-(beta-hydroxybutyryl)lysine; alternate. Residues Lys-6 and Lys-10 each carry the N6-acetyllysine; alternate modification. The span at Gln-7 to Ser-19 shows a compositional bias: basic residues. Lys-10 carries the N6-lactoyllysine; alternate modification. Position 10 is an N6-succinyllysine; alternate (Lys-10). Glycyl lysine isopeptide (Lys-Gly) (interchain with G-Cter in ubiquitin) cross-links involve residues Lys-14 and Lys-16. Position 37 is an N6-(2-hydroxyisobutyryl)lysine; alternate (Lys-37). Lys-37 carries the post-translational modification N6-(beta-hydroxybutyryl)lysine; alternate. At Lys-37 the chain carries N6-crotonyllysine; alternate. Residues Lys-75 and Lys-76 each carry the N6-(2-hydroxyisobutyryl)lysine modification. The residue at position 96 (Lys-96) is an N6-(2-hydroxyisobutyryl)lysine; alternate. The residue at position 96 (Lys-96) is an N6-succinyllysine; alternate. N6-glutaryllysine; alternate is present on Lys-96. The residue at position 105 (Gln-105) is an N5-methylglutamine. An N6-(2-hydroxyisobutyryl)lysine; alternate modification is found at Lys-119. Lys-119 and Lys-120 each carry N6-crotonyllysine; alternate. N6-glutaryllysine; alternate occurs at positions 119 and 120. The residue at position 120 (Lys-120) is an N6-(beta-hydroxybutyryl)lysine; alternate. Lys-120 is covalently cross-linked (Glycyl lysine isopeptide (Lys-Gly) (interchain with G-Cter in ubiquitin); alternate). Thr-121 is subject to Phosphothreonine; by DCAF1. Position 126 is an N6-(beta-hydroxybutyryl)lysine; alternate (Lys-126). The residue at position 126 (Lys-126) is an N6-crotonyllysine; alternate. Lys-126 is modified (N6-glutaryllysine; alternate).

Belongs to the histone H2A family. In terms of assembly, the nucleosome is a histone octamer containing two molecules each of H2A, H2B, H3 and H4 assembled in one H3-H4 heterotetramer and two H2A-H2B heterodimers. The octamer wraps approximately 147 bp of DNA. Deiminated on Arg-4 in granulocytes upon calcium entry. Post-translationally, monoubiquitination of Lys-120 (H2AK119Ub) by RING1, TRIM37 and RNF2/RING2 complex gives a specific tag for epigenetic transcriptional repression and participates in X chromosome inactivation of female mammals. It is involved in the initiation of both imprinted and random X inactivation. Ubiquitinated H2A is enriched in inactive X chromosome chromatin. Ubiquitination of H2A functions downstream of methylation of 'Lys-27' of histone H3 (H3K27me). H2AK119Ub by RNF2/RING2 can also be induced by ultraviolet and may be involved in DNA repair. Following DNA double-strand breaks (DSBs), it is ubiquitinated through 'Lys-63' linkage of ubiquitin moieties by the E2 ligase UBE2N and the E3 ligases RNF8 and RNF168, leading to the recruitment of repair proteins to sites of DNA damage. Ubiquitination at Lys-14 and Lys-16 (H2AK13Ub and H2AK15Ub, respectively) in response to DNA damage is initiated by RNF168 that mediates monoubiquitination at these 2 sites, and 'Lys-63'-linked ubiquitin are then conjugated to monoubiquitin; RNF8 is able to extend 'Lys-63'-linked ubiquitin chains in vitro. Deubiquitinated by USP51 at Lys-14 and Lys-16 (H2AK13Ub and H2AK15Ub, respectively) after damaged DNA is repaired. H2AK119Ub and ionizing radiation-induced 'Lys-63'-linked ubiquitination (H2AK13Ub and H2AK15Ub) are distinct events. In terms of processing, phosphorylation on Ser-2 (H2AS1ph) is enhanced during mitosis. Phosphorylation on Ser-2 by RPS6KA5/MSK1 directly represses transcription. Acetylation of H3 inhibits Ser-2 phosphorylation by RPS6KA5/MSK1. Phosphorylation at Thr-121 (H2AT120ph) by DCAF1 is present in the regulatory region of many tumor suppresor genes and down-regulates their transcription. Symmetric dimethylation on Arg-4 by the PRDM1/PRMT5 complex may play a crucial role in the germ-cell lineage. Post-translationally, glutamine methylation at Gln-105 (H2AQ104me) by FBL is specifically dedicated to polymerase I. It is present at 35S ribosomal DNA locus and impairs binding of the FACT complex. In terms of processing, crotonylation (Kcr) is specifically present in male germ cells and marks testis-specific genes in post-meiotic cells, including X-linked genes that escape sex chromosome inactivation in haploid cells. Crotonylation marks active promoters and enhancers and confers resistance to transcriptional repressors. It is also associated with post-meiotically activated genes on autosomes. Hydroxybutyrylation of histones is induced by starvation. Post-translationally, lactylated in macrophages by EP300/P300 by using lactoyl-CoA directly derived from endogenous or exogenous lactate, leading to stimulates gene transcription.

Its subcellular location is the nucleus. It localises to the chromosome. Functionally, core component of nucleosome. Nucleosomes wrap and compact DNA into chromatin, limiting DNA accessibility to the cellular machineries which require DNA as a template. Histones thereby play a central role in transcription regulation, DNA repair, DNA replication and chromosomal stability. DNA accessibility is regulated via a complex set of post-translational modifications of histones, also called histone code, and nucleosome remodeling. This chain is Histone H2A type 1-K, found in Mus musculus (Mouse).